Reading from the N-terminus, the 519-residue chain is Cytochrome P450 52E1 (519 aa).

A run of 2 helical transmembrane segments spans residues 10 to 30 (ALGG…FYFI) and 44 to 64 (VIVF…TAML). C479 is a binding site for heme.

This sequence belongs to the cytochrome P450 family. It depends on heme as a cofactor.

The protein localises to the membrane. Functionally, together with an NADPH cytochrome P450 the enzyme system catalyzes the terminal hydroxylation as the first step in the assimilation of alkanes and fatty acids. The polypeptide is Cytochrome P450 52E1 (CYP52E1) (Candida apicola (Yeast)).